The chain runs to 403 residues: Myeloid cell surface antigen CD33 (403 aa).

Residues 1 to 16 form the signal peptide; that stretch reads MLWPLPLFLLCAGSLA. One can recognise an Ig-like V-type domain in the interval 17–120; the sequence is QDLEFQLVAP…DTGMYFFRVV (104 aa). At 18 to 240 the chain is on the extracellular side; the sequence is DLEFQLVAPE…VTRKSGQMRE (223 aa). Intrachain disulfides connect C36–C169, C41–C100, and C163–C212. A glycan (N-linked (GlcNAc...) asparagine) is linked at N110. R118 contributes to the N-acetylneuraminate binding site. The 84-residue stretch at 145–228 folds into the Ig-like C2-type domain; the sequence is PDIIIPGTLE…AGVTVERTIQ (84 aa). N160 carries N-linked (GlcNAc...) asparagine glycosylation. N-linked (GlcNAc...) asparagine glycosylation is present at N230. A helical transmembrane segment spans residues 241 to 267; the sequence is LVLVAVGEATVKLLILGLCLVFLIVMF. Topologically, residues 268-403 are cytoplasmic; the sequence is CRRKTTKLSV…MLLCVSLTLS (136 aa).

It belongs to the immunoglobulin superfamily. SIGLEC (sialic acid binding Ig-like lectin) family. As to quaternary structure, homodimer; disulfide-linked. Interacts with PTPN6/SHP-1 and PTPN11/SHP-2 upon phosphorylation. Interacts with C1QA (via C-terminus); this interaction activates CD33 inhibitory motifs. Post-translationally, glycosylated. Phosphorylation is involved in binding to PTPN6 and PTPN11. Expressed on myeloid precursors in the bone marrow. In the peripheral blood, mostly expressed on granulocytes.

Its subcellular location is the cell membrane. Sialic-acid-binding immunoglobulin-like lectin (Siglec) that plays a role in mediating cell-cell interactions and in maintaining immune cells in a resting state. Preferentially binds sialic acid to the short O-linked glycans of certain mucins. This Mus musculus (Mouse) protein is Myeloid cell surface antigen CD33 (Cd33).